The sequence spans 461 residues: Serine carboxypeptidase-like 45 (461 aa).

Positions 1-24 (MSPLQWLTISFALIIFHSLTVSSS) are cleaved as a signal peptide. 3 cysteine pairs are disulfide-bonded: Cys-86-Cys-340, Cys-243-Cys-261, and Cys-286-Cys-309. Asn-168 is a glycosylation site (N-linked (GlcNAc...) asparagine). The active site involves Ser-177. An N-linked (GlcNAc...) asparagine glycan is attached at Asn-244. Residues Asp-377 and His-434 contribute to the active site.

It belongs to the peptidase S10 family. In terms of tissue distribution, ubiquitous.

It localises to the secreted. Its function is as follows. Probable carboxypeptidase. The polypeptide is Serine carboxypeptidase-like 45 (SCPL45) (Arabidopsis thaliana (Mouse-ear cress)).